A 610-amino-acid polypeptide reads, in one-letter code: Phosphoenolpyruvate carboxykinase [GTP] (610 aa).

Residues Arg82 and 221–223 (YGG) contribute to the substrate site. The Mn(2+) site is built by Lys230 and His250. Ser272 provides a ligand contact to substrate. Residue 273–278 (ACGKTN) participates in GTP binding. The active site involves Cys274. Residue Asp297 participates in Mn(2+) binding. Position 387-389 (387-389 (NSR)) interacts with substrate. GTP contacts are provided by residues Arg389, Arg420, and 515 to 518 (FGDN).

The protein belongs to the phosphoenolpyruvate carboxykinase [GTP] family. As to quaternary structure, monomer. The cofactor is Mn(2+).

It is found in the cytoplasm. The catalysed reaction is oxaloacetate + GTP = phosphoenolpyruvate + GDP + CO2. The protein operates within carbohydrate biosynthesis; gluconeogenesis. Catalyzes the conversion of oxaloacetate (OAA) to phosphoenolpyruvate (PEP), the rate-limiting step in the metabolic pathway that produces glucose from lactate and other precursors derived from the citric acid cycle. The protein is Phosphoenolpyruvate carboxykinase [GTP] of Corynebacterium glutamicum (strain R).